The chain runs to 535 residues: Cytochrome P450 4c3 (535 aa).

Residues Glu-342 and Cys-481 each coordinate heme.

This sequence belongs to the cytochrome P450 family. It depends on heme as a cofactor.

The protein resides in the endoplasmic reticulum membrane. Its subcellular location is the microsome membrane. May be involved in the metabolism of insect hormones and in the breakdown of synthetic insecticides. This Drosophila melanogaster (Fruit fly) protein is Cytochrome P450 4c3 (Cyp4c3).